Reading from the N-terminus, the 57-residue chain is MPAIQPPLYLTFLLLILLYRIITLYVWVVSTITYKTAVRHAALYQRSLFRWSFDHSL.

Topologically, residues 1-8 (MPAIQPPL) are virion surface. A helical transmembrane segment spans residues 9–29 (YLTFLLLILLYRIITLYVWVV). Residues 30-57 (STITYKTAVRHAALYQRSLFRWSFDHSL) are Intravirion-facing.

The protein belongs to the rubulavirus small hydrophobic protein family. Interacts with host TNFRSF1A, RIPK1 and IRAK1; these interactions interfere with host NF-kappa-B activation at the level of receptor complexes. Interacts with host protein UBQLN4.

It localises to the virion membrane. The protein resides in the host cell membrane. In terms of biological role, plays a role in the inhibition of the host NF-kappa-B pathway. This inhibition occurs at the receptor level, by preventing the signaling of TNFR1 as well as IL-1R and TLR3. This is Small hydrophobic protein (SH) from Mumps virus (strain Belfast) (MuV).